The chain runs to 164 residues: FMN reductase (NADH) RutF (164 aa).

The protein belongs to the non-flavoprotein flavin reductase family. RutF subfamily.

The catalysed reaction is FMNH2 + NAD(+) = FMN + NADH + 2 H(+). Functionally, catalyzes the reduction of FMN to FMNH2 which is used to reduce pyrimidine by RutA via the Rut pathway. The sequence is that of FMN reductase (NADH) RutF from Escherichia coli (strain K12 / MC4100 / BW2952).